The sequence spans 472 residues: Uronate isomerase (472 aa).

It belongs to the metallo-dependent hydrolases superfamily. Uronate isomerase family.

It catalyses the reaction D-glucuronate = D-fructuronate. The enzyme catalyses aldehydo-D-galacturonate = keto-D-tagaturonate. Its pathway is carbohydrate metabolism; pentose and glucuronate interconversion. This is Uronate isomerase from Xanthomonas oryzae pv. oryzae (strain MAFF 311018).